Consider the following 78-residue polypeptide: Surfactant-associated protein 2 (78 aa).

The first 19 residues, 1–19 (MGAGLPLVLLLTLVGSSQG), serve as a signal peptide directing secretion. The N-linked (GlcNAc...) asparagine glycan is linked to Asn-37.

N-glycosylated.

The protein resides in the secreted. It is found in the cytoplasmic vesicle. It localises to the secretory vesicle. Its subcellular location is the golgi apparatus. Functionally, putative surfactant protein. This is Surfactant-associated protein 2 (SFTA2) from Bos taurus (Bovine).